Here is a 325-residue protein sequence, read N- to C-terminus: Ribosomal RNA small subunit methyltransferase H (325 aa).

Residues 41–43 (GGH), Asp-60, Tyr-87, Asp-108, and Gln-115 contribute to the S-adenosyl-L-methionine site. The interval 295–325 (DDDEKAANPRAAPVRLRAAERTRASEDRRGS) is disordered. The span at 311–325 (RAAERTRASEDRRGS) shows a compositional bias: basic and acidic residues.

Belongs to the methyltransferase superfamily. RsmH family.

It is found in the cytoplasm. The catalysed reaction is cytidine(1402) in 16S rRNA + S-adenosyl-L-methionine = N(4)-methylcytidine(1402) in 16S rRNA + S-adenosyl-L-homocysteine + H(+). In terms of biological role, specifically methylates the N4 position of cytidine in position 1402 (C1402) of 16S rRNA. The chain is Ribosomal RNA small subunit methyltransferase H from Leifsonia xyli subsp. xyli (strain CTCB07).